The primary structure comprises 283 residues: NADPH-dependent 7-cyano-7-deazaguanine reductase (283 aa).

90–92 (IES) lines the substrate pocket. 92-93 (SK) is a binding site for NADPH. Cys191 serves as the catalytic Thioimide intermediate. Asp198 functions as the Proton donor in the catalytic mechanism. 230–231 (HE) provides a ligand contact to substrate. An NADPH-binding site is contributed by 259–260 (RG).

This sequence belongs to the GTP cyclohydrolase I family. QueF type 2 subfamily. As to quaternary structure, homodimer.

It localises to the cytoplasm. The catalysed reaction is 7-aminomethyl-7-carbaguanine + 2 NADP(+) = 7-cyano-7-deazaguanine + 2 NADPH + 3 H(+). It participates in tRNA modification; tRNA-queuosine biosynthesis. Its function is as follows. Catalyzes the NADPH-dependent reduction of 7-cyano-7-deazaguanine (preQ0) to 7-aminomethyl-7-deazaguanine (preQ1). The protein is NADPH-dependent 7-cyano-7-deazaguanine reductase of Tolumonas auensis (strain DSM 9187 / NBRC 110442 / TA 4).